Reading from the N-terminus, the 601-residue chain is MTHKTFPSWPDVAPQLIETAAGRSPADTVIRNGKWVNVHTREVLEGHDIAIKAGRIAYVGPDASYCTGPETEVIDAEGRYMMPGLCDGHMHIESGMLTPAEFARAVIPHGTTTMFTDPHEIANVLGLEGVRLMHDEALLQPVNIYTQMPSCAPSAPGLETTGYEISAEDVAEAMTWPGIIGLGEMMNFPGVAHGDPKMLAEIAATQRSGKTVGGHYASPDLGPDFAAYVAGGPADDHEGTCEADAITRMRQGMRAMVRLGSAWYDVEAQITAITEKGLDPRNFILCTDDCHSGTLVNEGHMNRAVRHAIDCGCDPLIAIQMATINTATHFGLEREIGSITPGRRADIILTSDLKTLPIEVVIARGQIVAESGSIKVECPHLDWPESARGTVHLGHTLAATDFELAAPEGANAVTANVIGVVENQAPTKALKAELPVRDGLVEGEGDVCQIALVERHRATGGVTNAFVSGFGYEGKMAMASTVAHDSHHMIVVGTDRTQMALAANRLAEVGGGITIFRDGAELALVELPIAGLMSDSPASEVAANAQKLVEAMQACGCTLNNAYMQHSLLALVVIPELRISDLGLVDVRSFKKIPVIEPFNE.

The protein belongs to the metallo-dependent hydrolases superfamily. Adenine deaminase family. Requires Mn(2+) as cofactor.

The catalysed reaction is adenine + H2O + H(+) = hypoxanthine + NH4(+). This is Adenine deaminase from Ruegeria sp. (strain TM1040) (Silicibacter sp.).